A 72-amino-acid chain; its full sequence is DNA-directed RNA polymerase subunit Rpo10 (72 aa).

Zn(2+) contacts are provided by Cys7, Cys10, Cys53, and Cys54.

The protein belongs to the archaeal Rpo10/eukaryotic RPB10 RNA polymerase subunit family. Part of the RNA polymerase complex. Zn(2+) is required as a cofactor.

The protein localises to the cytoplasm. The catalysed reaction is RNA(n) + a ribonucleoside 5'-triphosphate = RNA(n+1) + diphosphate. Functionally, DNA-dependent RNA polymerase (RNAP) catalyzes the transcription of DNA into RNA using the four ribonucleoside triphosphates as substrates. This Thermoplasma acidophilum (strain ATCC 25905 / DSM 1728 / JCM 9062 / NBRC 15155 / AMRC-C165) protein is DNA-directed RNA polymerase subunit Rpo10.